The chain runs to 152 residues: 3-hydroxyacyl-[acyl-carrier-protein] dehydratase FabZ (152 aa).

His58 is a catalytic residue.

Belongs to the thioester dehydratase family. FabZ subfamily.

The protein localises to the cytoplasm. The enzyme catalyses a (3R)-hydroxyacyl-[ACP] = a (2E)-enoyl-[ACP] + H2O. In terms of biological role, involved in unsaturated fatty acids biosynthesis. Catalyzes the dehydration of short chain beta-hydroxyacyl-ACPs and long chain saturated and unsaturated beta-hydroxyacyl-ACPs. This chain is 3-hydroxyacyl-[acyl-carrier-protein] dehydratase FabZ, found in Prochlorococcus marinus (strain AS9601).